The following is a 339-amino-acid chain: MSFFNIVIAILAFGVLILIHELGHFVLAKLNDVKVEEFAIGMGPKLLGIKGKETQYSIRALPIGGYVKMLGDESKSDDPRAFNNKSSARRLSIVIAGPIMNLILAAVLFCIVGMSEGIALPTVGKISANSPAQKIGIKAGDTIVKINNYSVHTWEDISFNMALNKGEGIKLALKNNGTIKKVTLVPQYSKKEKMYLIGISPKFIDKPTIIEGAKYGTSETVTMIKTVYLSLKMMVTGKASAKDVSGPVSIIKVTGAAANAGFIRLVNFIAFISAQLGVMNLLPIPALDGGFVFLFLFQMITGKKVDDDKVGFVNTIGFALLMILMIVVTIKDVVYPINF.

His20 is a Zn(2+) binding site. Residue Glu21 is part of the active site. Position 24 (His24) interacts with Zn(2+). 3 helical membrane-spanning segments follow: residues 91-113 (LSIVIAGPIMNLILAAVLFCIVG), 275-297 (QLGVMNLLPIPALDGGFVFLFLF), and 310-330 (VGFVNTIGFALLMILMIVVTI). The PDZ domain occupies 99–177 (IMNLILAAVL…GIKLALKNNG (79 aa)).

Belongs to the peptidase M50B family. Zn(2+) serves as cofactor.

The protein localises to the cell membrane. This chain is Putative zinc metalloprotease CA_C1796, found in Clostridium acetobutylicum (strain ATCC 824 / DSM 792 / JCM 1419 / IAM 19013 / LMG 5710 / NBRC 13948 / NRRL B-527 / VKM B-1787 / 2291 / W).